Consider the following 305-residue polypeptide: Ribonuclease BN (305 aa).

Positions 64, 66, 68, 69, 141, 212, and 270 each coordinate Zn(2+). Residue Asp68 is the Proton acceptor of the active site.

Belongs to the RNase Z family. RNase BN subfamily. Homodimer. Zn(2+) serves as cofactor.

Functionally, zinc phosphodiesterase, which has both exoribonuclease and endoribonuclease activities. The polypeptide is Ribonuclease BN (Escherichia coli O139:H28 (strain E24377A / ETEC)).